A 439-amino-acid polypeptide reads, in one-letter code: MDKNGIVLMRKYELGRLLGQGTFAKVYHARNIKTGESVAIKVIDKQKVAKVGLIDQIKREISVMRLVRHPHVVFLHEVMASKTKIYFAMEYVKGGELFDKVSKGKLKENIARKYFQQLIGAIDYCHSRGVYHRDLKPENLLLDENGDLKISDFGLSALRESKQQDGLLHTTCGTPAYVAPEVIGKKGYDGAKADVWSCGVVLYVLLAGFLPFHEQNLVEMYRKITKGEFKCPNWFPPEVKKLLSRILDPNPNSRIKIEKIMENSWFQKGFKKIETPKSPESHQIDSLISDVHAAFSVKPMSYNAFDLISSLSQGFDLSGLFEKEERSESKFTTKKDAKEIVSKFEEIATSSERFNLTKSDVGVKMEDKREGRKGHLAIDVEIFEVTNSFHMVEFKKSGGDTMEYKQFCDRELRPSLKDIVWKWQGNNNNSNNEKIEVIH.

The Protein kinase domain occupies 12–266; that stretch reads YELGRLLGQG…IEKIMENSWF (255 aa). Residues 18–26 and K41 contribute to the ATP site; that span reads LGQGTFAKV. The active-site Proton acceptor is D134. Positions 152–181 are activation loop; the sequence is DFGLSALRESKQQDGLLHTTCGTPAYVAPE. The residue at position 156 (S156) is a Phosphoserine. T170 carries the post-translational modification Phosphothreonine. One can recognise an NAF domain in the interval 297 to 322; it reads VKPMSYNAFDLISSLSQGFDLSGLFE. Positions 326–356 are PPI; that stretch reads RSESKFTTKKDAKEIVSKFEEIATSSERFNL.

This sequence belongs to the protein kinase superfamily. CAMK Ser/Thr protein kinase family. SNF1 subfamily. The cofactor is Mn(2+). Post-translationally, autophosphorylated. In terms of tissue distribution, confined to mature leaves.

The enzyme catalyses L-seryl-[protein] + ATP = O-phospho-L-seryl-[protein] + ADP + H(+). The catalysed reaction is L-threonyl-[protein] + ATP = O-phospho-L-threonyl-[protein] + ADP + H(+). Its function is as follows. CIPK serine-threonine protein kinases interact with CBL proteins. Binding of a CBL protein to the regulatory NAF domain of CIPK protein lead to the activation of the kinase in a calcium-dependent manner. Required for the abscisic acid-mediated (ABA) signaling pathway involved in seed germination and growth elongation inhibition. This Arabidopsis thaliana (Mouse-ear cress) protein is CBL-interacting serine/threonine-protein kinase 20 (CIPK20).